The primary structure comprises 343 residues: UPF0283 membrane protein blr7254 (343 aa).

Helical transmembrane passes span 64–84 (GALF…LGVV), 97–117 (LGFV…VVIG), and 214–234 (IVTA…VAAL).

This sequence belongs to the UPF0283 family.

It is found in the cell inner membrane. The chain is UPF0283 membrane protein blr7254 from Bradyrhizobium diazoefficiens (strain JCM 10833 / BCRC 13528 / IAM 13628 / NBRC 14792 / USDA 110).